Reading from the N-terminus, the 170-residue chain is Adenine phosphoribosyltransferase (170 aa).

The protein belongs to the purine/pyrimidine phosphoribosyltransferase family. Homodimer.

It localises to the cytoplasm. The catalysed reaction is AMP + diphosphate = 5-phospho-alpha-D-ribose 1-diphosphate + adenine. It participates in purine metabolism; AMP biosynthesis via salvage pathway; AMP from adenine: step 1/1. In terms of biological role, catalyzes a salvage reaction resulting in the formation of AMP, that is energically less costly than de novo synthesis. This chain is Adenine phosphoribosyltransferase, found in Trichodesmium erythraeum (strain IMS101).